Reading from the N-terminus, the 294-residue chain is Dof zinc finger protein DOF4.1 (294 aa).

The Dof-type zinc finger occupies Arg-68–Lys-122. Zn(2+)-binding residues include Cys-70, Cys-73, Cys-95, and Cys-98. Disordered regions lie at residues Arg-109–Ala-178 and Met-247–Trp-294. Composition is skewed to polar residues over residues Pro-126–Asn-136 and Lys-157–Met-173. Residues Gly-251–Gly-273 show a composition bias toward basic and acidic residues. The segment covering Ile-284–Trp-294 has biased composition (gly residues).

It is found in the nucleus. In terms of biological role, transcription factor that binds specifically to a 5'-AA[AG]G-3' consensus core sequence. The protein is Dof zinc finger protein DOF4.1 (DOF4.1) of Arabidopsis thaliana (Mouse-ear cress).